The following is a 379-amino-acid chain: Queuine tRNA-ribosyltransferase (379 aa).

Asp-94 serves as the catalytic Proton acceptor. Residues 94-98 (DSGGF), Asp-148, Gln-191, and Gly-218 contribute to the substrate site. The segment at 249–255 (GVGSPDS) is RNA binding. The active-site Nucleophile is Asp-268. Residues 273 to 277 (TRIAR) are RNA binding; important for wobble base 34 recognition. Positions 306, 308, 311, and 337 each coordinate Zn(2+).

It belongs to the queuine tRNA-ribosyltransferase family. As to quaternary structure, homodimer. Within each dimer, one monomer is responsible for RNA recognition and catalysis, while the other monomer binds to the replacement base PreQ1. The cofactor is Zn(2+).

The catalysed reaction is 7-aminomethyl-7-carbaguanine + guanosine(34) in tRNA = 7-aminomethyl-7-carbaguanosine(34) in tRNA + guanine. The protein operates within tRNA modification; tRNA-queuosine biosynthesis. Functionally, catalyzes the base-exchange of a guanine (G) residue with the queuine precursor 7-aminomethyl-7-deazaguanine (PreQ1) at position 34 (anticodon wobble position) in tRNAs with GU(N) anticodons (tRNA-Asp, -Asn, -His and -Tyr). Catalysis occurs through a double-displacement mechanism. The nucleophile active site attacks the C1' of nucleotide 34 to detach the guanine base from the RNA, forming a covalent enzyme-RNA intermediate. The proton acceptor active site deprotonates the incoming PreQ1, allowing a nucleophilic attack on the C1' of the ribose to form the product. After dissociation, two additional enzymatic reactions on the tRNA convert PreQ1 to queuine (Q), resulting in the hypermodified nucleoside queuosine (7-(((4,5-cis-dihydroxy-2-cyclopenten-1-yl)amino)methyl)-7-deazaguanosine). The chain is Queuine tRNA-ribosyltransferase from Halalkalibacterium halodurans (strain ATCC BAA-125 / DSM 18197 / FERM 7344 / JCM 9153 / C-125) (Bacillus halodurans).